The chain runs to 62 residues: Large ribosomal subunit protein bL28 (62 aa).

The protein belongs to the bacterial ribosomal protein bL28 family.

This chain is Large ribosomal subunit protein bL28, found in Thermobifida fusca (strain YX).